Consider the following 282-residue polypeptide: Phosphoglycerate mutase-like protein 1 (282 aa).

Residue His23 is the Tele-phosphohistidine intermediate of the active site. Glu135 (proton donor/acceptor) is an active-site residue.

Belongs to the phosphoglycerate mutase family.

Functionally, may play a role in carbohydrates metabolism. This chain is Phosphoglycerate mutase-like protein 1, found in Arabidopsis thaliana (Mouse-ear cress).